The following is a 203-amino-acid chain: Large ribosomal subunit protein uL22 (203 aa).

Polar residues predominate over residues 138–167 (PENTQSGALSQQSQAEQPQNDPENGVDSQL). The segment at 138 to 203 (PENTQSGALS…TVLAQEKEVK (66 aa)) is disordered. The segment covering 168-177 (SAKTNSTTTA) has biased composition (low complexity). Residues 183-196 (ADNSTKNDATNTVL) show a composition bias toward polar residues.

Belongs to the universal ribosomal protein uL22 family. In terms of assembly, part of the 50S ribosomal subunit.

Functionally, this protein binds specifically to 23S rRNA; its binding is stimulated by other ribosomal proteins, e.g. L4, L17, and L20. It is important during the early stages of 50S assembly. It makes multiple contacts with different domains of the 23S rRNA in the assembled 50S subunit and ribosome. Its function is as follows. The globular domain of the protein is located near the polypeptide exit tunnel on the outside of the subunit, while an extended beta-hairpin is found that lines the wall of the exit tunnel in the center of the 70S ribosome. This is Large ribosomal subunit protein uL22 from Mesomycoplasma hyopneumoniae (strain 7448) (Mycoplasma hyopneumoniae).